The following is a 147-amino-acid chain: Large ribosomal subunit protein uL13 (147 aa).

It belongs to the universal ribosomal protein uL13 family. In terms of assembly, part of the 50S ribosomal subunit.

Its function is as follows. This protein is one of the early assembly proteins of the 50S ribosomal subunit, although it is not seen to bind rRNA by itself. It is important during the early stages of 50S assembly. This chain is Large ribosomal subunit protein uL13, found in Rhodococcus jostii (strain RHA1).